A 450-amino-acid polypeptide reads, in one-letter code: MTEVSVETTSAGSESPSIPLPVHIDPADLAAELAVVLSERAGEEYLLYERGGEWVLATGVRAMIELDSDELRVIRDGVTQRQHWSGRPGPVLGEAIDRLLLETDQLFGWIAFEFGVYRYGLQQRLAPGTALARVFWPNGRIVVTREAIQLFGTSTGRRDDVLGVLGDGVPGLRDASAVDVVTDPSNYRDRVASAVAEIAAGRYHKVILSRCLQVPFAVDFPSTYRLARRHNTPVRSFLLRLGGIRAVGYSPELVAAVRHDGVVVTEPLAGTRAFGRGALHDRQARDDLESNSKEIVEHAISVRSSLQEMAEIAEPGTAVVTDFMTVRERGSVQHLGSTVSGRLGTSNDRMDALEALFPAVTASGIPKAGGVEAILRLDEGPRGLYSGAVVMVSADGALDAALTLRAAYEHDGKTWLRAGAGIIEESTPEREFEETCEKLSTLAPYLIARQ.

Catalysis depends on Glu-252, which acts as the Proton donor. 270-271 is a substrate binding site; that stretch reads GT. Glu-297 serves as a coordination point for Mg(2+). Substrate is bound by residues Tyr-385, Arg-405, and 419–421; that span reads GAG. Residues Glu-431 and Glu-434 each contribute to the Mg(2+) site. Lys-438 is a substrate binding site.

It belongs to the anthranilate synthase component I family. Salicylate synthase subfamily. Monomer. Requires Mg(2+) as cofactor.

The catalysed reaction is chorismate = isochorismate. It carries out the reaction isochorismate = salicylate + pyruvate. It catalyses the reaction chorismate = prephenate. It functions in the pathway siderophore biosynthesis; mycobactin biosynthesis. Involved in the incorporation of salicylate into the virulence-conferring salicylate-based siderophore mycobactin. Catalyzes the initial conversion of chorismate to yield the intermediate isochorismate (isochorismate synthase activity), and the subsequent elimination of the enolpyruvyl side chain in a lyase reaction to give salicylate (isochorismate pyruvate-lyase activity). In the absence of magnesium, MbtI displays a chorismate mutase activity and converts chorismate to prephenate. The sequence is that of Salicylate synthase (mbtI) from Mycolicibacterium paratuberculosis (strain ATCC BAA-968 / K-10) (Mycobacterium paratuberculosis).